The sequence spans 414 residues: Enolase (414 aa).

Q162 is a binding site for (2R)-2-phosphoglycerate. The active-site Proton donor is the E204. Positions 239, 280, and 307 each coordinate Mg(2+). (2R)-2-phosphoglycerate-binding residues include K332, R361, S362, and K383. K332 (proton acceptor) is an active-site residue.

The protein belongs to the enolase family. It depends on Mg(2+) as a cofactor.

The protein resides in the cytoplasm. The protein localises to the secreted. Its subcellular location is the cell surface. It carries out the reaction (2R)-2-phosphoglycerate = phosphoenolpyruvate + H2O. Its pathway is carbohydrate degradation; glycolysis; pyruvate from D-glyceraldehyde 3-phosphate: step 4/5. In terms of biological role, catalyzes the reversible conversion of 2-phosphoglycerate (2-PG) into phosphoenolpyruvate (PEP). It is essential for the degradation of carbohydrates via glycolysis. The polypeptide is Enolase (Campylobacter lari (strain RM2100 / D67 / ATCC BAA-1060)).